We begin with the raw amino-acid sequence, 404 residues long: Epoxide hydrolase 1 (404 aa).

The helical transmembrane segment at 74-96 (ILVRLLQFYYFVKFSAILFLGFA) threads the bilayer. Residues 140-389 (PLMLFIHGYP…ASHWVQQDEP (250 aa)) enclose the AB hydrolase-1 domain. Catalysis depends on Asp215, which acts as the Nucleophile. Tyr327 (proton donor) is an active-site residue. The active-site Proton acceptor is His382.

The protein belongs to the AB hydrolase superfamily. Epoxide hydrolase family.

The protein localises to the membrane. It carries out the reaction an epoxide + H2O = an ethanediol. The enzyme catalyses 8,9-epoxy-(5Z,11Z,14Z)-eicosatrienoate + H2O = 8,9-dihydroxy-(5Z,11Z,14Z)-eicosatrienoate. It catalyses the reaction 11,12-epoxy-(5Z,8Z,14Z)-eicosatrienoate + H2O = 11,12-dihydroxy-(5Z,8Z,14Z)-eicosatrienoate. The catalysed reaction is 14,15-epoxy-(5Z,8Z,11Z)-eicosatrienoate + H2O = 14,15-dihydroxy-(5Z,8Z,11Z)-eicosatrienoate. It carries out the reaction 12,13-epoxy-(9Z)-octadecenoate + H2O = 12,13-dihydroxy-(9Z)-octadecenoate. The enzyme catalyses 9,10-epoxy-(12Z)-octadecenoate + H2O = 9,10-dihydroxy-(12Z)-octadecenoate. The protein operates within lipid metabolism. In terms of biological role, catalyzes the hydrolysis of epoxide-containing fatty acids. Active against epoxyeicosatrienoic acids (EETs) including 8,9-epoxy-(5Z,11Z,14Z)-eicosatrienoate (8,9-EET), 11,12-epoxy-(5Z,8Z,14Z)-eicosatrienoate (11,12-EET) and 14,15-epoxy-(5Z,8Z,11Z)-eicosatrienoate (14,15-EET) and the linoleic acid metabolites 12,13-epoxy-(9Z)-octadecenoate (12,13-EpOME) and 9,10-epoxy-(12Z)-octadecenoate (9,10-EpOME). These epoxides function as lipid signaling molecules, the enzyme can deplete the supply of the epoxide signal by transforming them into diol species that are more readily eliminated through excretion. The chain is Epoxide hydrolase 1 from Caenorhabditis elegans.